A 391-amino-acid polypeptide reads, in one-letter code: Putative neutrophil cytosol factor 1B (391 aa).

The 126-residue stretch at Met1–Leu126 folds into the PX domain. SH3 domains lie at Ile157–Ser216 and Tyr227–Gln286. A disordered region spans residues Gln286 to Val391. Phosphoserine occurs at positions 304 and 305. Basic residues predominate over residues His310–Arg319. Residues Ser321, Ser329, Ser346, and Ser349 each carry the phosphoserine modification.

It localises to the cytoplasm. May be required for activation of the latent NADPH oxidase (necessary for superoxide production). The polypeptide is Putative neutrophil cytosol factor 1B (NCF1B) (Homo sapiens (Human)).